Consider the following 822-residue polypeptide: MAAPRRRMGLEKIGLYDVGRAIGKGNFATVRIARHKIAKTKVAIKSIDVSALDRENLIKLEREVKIVKVIDHPHIVKSYEIMRVDNMLYIVSEYCSSGELYETLIEKGRVAENVARKWFSETASAVAYLHSQGIVHRDLKAENILLGKNSNIKIIDFGFSNFQTGDQLLNTWCGSPPYAAPELLLGNSYDGMKADIWSMGVLLYILVAGGFPFPSDSVNKLKRSVLSGLVKIPYWVSVECADFIRKMLVLNPGKRYTIQNVLQHRWMHIRDDVQKNQAAQLLEAIPSSSIEIRQQSTKLNPTIMMFMQQHGKWSEEQIIDAVLGRDFESPIFATYELLADKVKKGTLEGTGEEFPRRGSRGSILSGKANVDEQPLTPTISAHQLAQLNLSSPDCDSDDSSNSDLCDDSPMSSMGPMNHERQFGTPHGLDIIGNRFENRRHTLCASEQLLSPNMMGQFPPPNLLLNNFSMNPPLGFPPMPEGQAAEFPLPSLHPAFATIPIADLSKMLPVPKSERRASAGETLLPTNFDLTQHLANLPAPPISFPTVEEEGKSYLSKYGGKRNTVHCLGNQLGGGIQNPIPRYQRTPYTKAPPAERRSSWASPSLSAQQQNHLEKLFKQALQTNNDMTRLHKEFKGLSHGCAQSQITNEGSSLACPQISITDEYNRQHNIAPSASSFDPVSIFQKNAQEVVFGQRPATAIGFSSTSFSGMSTPEQTTRSIDDRVRSIVCTLPFTEVIDELKASLNILKIPFSESHEMVYEPQVTEMRRLSLPSGVEIGVAVLPPEHKAHVEFAIINNDSPTSEYLCDQLICRLRMIDPSWSSE.

Residues 16-267 (YDVGRAIGKG…IQNVLQHRWM (252 aa)) enclose the Protein kinase domain. ATP contacts are provided by residues 22 to 30 (IGKGNFATV) and K45. The Proton acceptor role is filled by D138. Disordered regions lie at residues 348-367 (EGTG…LSGK), 389-423 (LSSP…RQFG), and 577-602 (NPIP…WASP). The segment covering 394–406 (CDSDDSSNSDLCD) has biased composition (acidic residues).

It belongs to the protein kinase superfamily. CAMK Ser/Thr protein kinase family. SNF1 subfamily. As to quaternary structure, interacts with tax-6. The cofactor is Mg(2+). Autophosphorylated. Elevated cAMP levels appears to act via PKA to directly or indirectly phosphorylate multiple sites on kin-29 and inhibit function. Primarily neuronal, with additional expression in body wall muscle and hypodermal cells. Among neuronal cells, expressed in multiple sensory neurons and interneurons in the lateral, anterior, and lumbar ganglia, as well as in motor neurons in the ventral motor cord. Present in the AWB and AWC olfactory neurons.

The protein localises to the cytoplasm. The protein resides in the nucleus. It catalyses the reaction L-seryl-[protein] + ATP = O-phospho-L-seryl-[protein] + ADP + H(+). It carries out the reaction L-threonyl-[protein] + ATP = O-phospho-L-threonyl-[protein] + ADP + H(+). Its function is as follows. Regulates chemoreceptor expression by phosphorylating the hda-4 class II histone deacetylase (HDAC) and inhibiting the gene repression functions of hda-4 and the mef-2 transcription factor, enabling the correct sensing and transduction of food signals. Role in determining body size, the dauer decision and serotonin-mediated egg laying. May modulate the Sma/Mab pathway and regulates development in the later larval stages. This chain is Serine/threonine-protein kinase kin-29, found in Caenorhabditis elegans.